The following is a 344-amino-acid chain: Phosphate acyltransferase (344 aa).

The protein belongs to the PlsX family. As to quaternary structure, homodimer. Probably interacts with PlsY.

Its subcellular location is the cytoplasm. The enzyme catalyses a fatty acyl-[ACP] + phosphate = an acyl phosphate + holo-[ACP]. It functions in the pathway lipid metabolism; phospholipid metabolism. Functionally, catalyzes the reversible formation of acyl-phosphate (acyl-PO(4)) from acyl-[acyl-carrier-protein] (acyl-ACP). This enzyme utilizes acyl-ACP as fatty acyl donor, but not acyl-CoA. The polypeptide is Phosphate acyltransferase (Enterobacter sp. (strain 638)).